The chain runs to 59 residues: Venom protein 27.7 (59 aa).

An N-terminal signal peptide occupies residues Met1–Ala29.

The protein belongs to the non-disulfide-bridged peptide (NDBP) superfamily. In terms of tissue distribution, expressed by the venom gland.

The protein resides in the secreted. The polypeptide is Venom protein 27.7 (Lychas mucronatus (Chinese swimming scorpion)).